The sequence spans 184 residues: 3-hydroxyanthranilate 3,4-dioxygenase (184 aa).

Arg44 contributes to the O2 binding site. Fe cation contacts are provided by His48, Glu54, and His92. Glu54 contributes to the substrate binding site. Arg96 and Glu106 together coordinate substrate. 4 residues coordinate a divalent metal cation: Cys121, Cys126, Cys162, and Cys165.

Belongs to the 3-HAO family. Fe(2+) is required as a cofactor.

The protein resides in the cytoplasm. It catalyses the reaction 3-hydroxyanthranilate + O2 = (2Z,4Z)-2-amino-3-carboxymuconate 6-semialdehyde. Its pathway is cofactor biosynthesis; NAD(+) biosynthesis; quinolinate from L-kynurenine: step 3/3. Catalyzes the oxidative ring opening of 3-hydroxyanthranilate to 2-amino-3-carboxymuconate semialdehyde, which spontaneously cyclizes to quinolinate. This Pyricularia oryzae (strain 70-15 / ATCC MYA-4617 / FGSC 8958) (Rice blast fungus) protein is 3-hydroxyanthranilate 3,4-dioxygenase.